Here is a 593-residue protein sequence, read N- to C-terminus: Eukaryotic peptide chain release factor subunit 1 (593 aa).

This sequence belongs to the eukaryotic release factor 1 family. As to quaternary structure, heterodimer of two subunits, one of which binds GTP.

It localises to the cytoplasm. In terms of biological role, directs the termination of nascent peptide synthesis (translation) in response to the termination codons UAA, UAG and UGA. The sequence is that of Eukaryotic peptide chain release factor subunit 1 from Caenorhabditis elegans.